Reading from the N-terminus, the 454-residue chain is Tegument protein VP16 homolog (454 aa).

It belongs to the herpesviridae tegument protein VP16 protein family. Associates with the VP16-induced complex; binding to host HCFC1 activates VP16 for association with the octamer motif-binding host protein POU2F1, to form a multiprotein-DNA complex responsible for activating transcription of the viral immediate early genes.

Its subcellular location is the virion tegument. The protein resides in the host nucleus. In terms of biological role, transcriptional activator of immediate-early (IE) gene products (alpha genes). Acts as a key activator of lytic infection by initiating the lytic program through the assembly of the transcriptional regulatory VP16-induced complex composed of VP16 and two cellular factors, HCFC1 and POU2F1. VP16-induced complex represents a regulatory switch: when it is on, it promotes IE-gene expression and thus lytic infection, and when it is off, it limits IE-gene transcription favoring latent infection. Its function is as follows. May play a role in the aggregation of tegument proteins around nucleocapsids during virus morphogenesis. This is Tegument protein VP16 homolog (12) from Equine herpesvirus 4 (strain 1942) (EHV-4).